A 201-amino-acid chain; its full sequence is Increased recombination centers protein 21 (201 aa).

One can recognise a Cytochrome b5 heme-binding domain in the interval 122–200 (PLRINRKIVK…LQVCFIGVVC (79 aa)). Residues His-158 and His-182 each coordinate heme.

The protein belongs to the cytochrome b5 family.

In terms of biological role, involved in resistance to carboplatin and cisplatin. Is probably involved in a pathway contributing to genomic integrity. This Saccharomyces cerevisiae (strain ATCC 204508 / S288c) (Baker's yeast) protein is Increased recombination centers protein 21 (IRC21).